The chain runs to 553 residues: ATP synthase F(1) complex subunit alpha, mitochondrial (553 aa).

A mitochondrion-targeting transit peptide spans 1 to 43 (MLSVRIAAAVARALPRRAGLVSKNALGSSFVGTRNLHASNTRL). Phosphoserine is present on residues Ser-53 and Ser-65. Ser-76 carries the post-translational modification Phosphoserine; alternate. O-linked (GlcNAc) serine; alternate glycosylation is present at Ser-76. The residue at position 106 (Ser-106) is a Phosphoserine. N6-acetyllysine is present on residues Lys-123, Lys-126, and Lys-132. The residue at position 134 (Thr-134) is a Phosphothreonine. Lys-161 carries the post-translational modification N6-acetyllysine; alternate. Lys-161 carries the post-translational modification N6-succinyllysine; alternate. A Phosphoserine modification is found at Ser-166. Position 167 is an N6-acetyllysine; alternate (Lys-167). An N6-succinyllysine; alternate modification is found at Lys-167. A Phosphoserine modification is found at Ser-184. Residue Arg-204 is modified to Omega-N-methylarginine. Residues Gln-215, Gly-217, Lys-218, Thr-219, and Ser-220 each contribute to the ATP site. Thr-219 lines the Mg(2+) pocket. N6-acetyllysine; alternate occurs at positions 230 and 239. N6-succinyllysine; alternate occurs at positions 230 and 239. An N6-acetyllysine modification is found at Lys-240. N6-acetyllysine; alternate occurs at positions 261 and 305. Lys-261 and Lys-305 each carry N6-succinyllysine; alternate. Mg(2+) is bound at residue Asp-312. Lys-427 bears the N6-acetyllysine; alternate mark. Lys-427 carries the N6-succinyllysine; alternate modification. Position 434 is an N6-acetyllysine (Lys-434). Residues Gln-473 and Gln-475 each coordinate ATP. N6-acetyllysine; alternate occurs at positions 498, 506, 531, and 539. Lys-498, Lys-506, Lys-531, and Lys-539 each carry N6-succinyllysine; alternate. Lys-541 carries the N6-acetyllysine modification.

This sequence belongs to the ATPase alpha/beta chains family. Homotrimer. Component of the ATP synthase complex composed at least of ATP5F1A/subunit alpha, ATP5F1B/subunit beta, ATP5MC1/subunit c (homooctomer), MT-ATP6/subunit a, MT-ATP8/subunit 8, ATP5ME/subunit e, ATP5MF/subunit f, ATP5MG/subunit g, ATP5MK/subunit k, ATP5MJ/subunit j, ATP5F1C/subunit gamma, ATP5F1D/subunit delta, ATP5F1E/subunit epsilon, ATP5PF/subunit F6, ATP5PB/subunit b, ATP5PD/subunit d, ATP5PO/subunit OSCP. ATP synthase complex consists of a soluble F(1) head domain (subunits alpha(3) and beta(3)) - the catalytic core - and a membrane F(0) domain - the membrane proton channel (subunits c, a, 8, e, f, g, k and j). These two domains are linked by a central stalk (subunits gamma, delta, and epsilon) rotating inside the F1 region and a stationary peripheral stalk (subunits F6, b, d, and OSCP). Interacts with ATPAF2. Interacts with HRG; the interaction occurs on the surface of T-cells and alters the cell morphology when associated with concanavalin (in vitro). Interacts with PLG (angiostatin peptide); the interaction inhibits most of the angiogenic properties of angiostatin. Interacts with BLOC1S1. Interacts with BCL2L1 isoform BCL-X(L); the interaction mediates the association of BCL2L1 isoform BCL-X(L) with the mitochondrial membrane F(1)F(0) ATP synthase and enhances neurons metabolic efficiency. Interacts with CLN5 and PPT1. Interacts with S100A1; this interaction increases F1-ATPase activity. Interacts with ABCB7; this interaction allows the regulation of cellular iron homeostasis and cellular reactive oxygen species (ROS) levels in cardiomyocytes. In terms of processing, acetylated on lysine residues. BLOC1S1 is required for acetylation. In terms of tissue distribution, expressed in flagella of epididymal sperm.

Its subcellular location is the mitochondrion. It is found in the mitochondrion inner membrane. The protein localises to the cell membrane. Its function is as follows. Subunit alpha, of the mitochondrial membrane ATP synthase complex (F(1)F(0) ATP synthase or Complex V) that produces ATP from ADP in the presence of a proton gradient across the membrane which is generated by electron transport complexes of the respiratory chain. ATP synthase complex consist of a soluble F(1) head domain - the catalytic core - and a membrane F(1) domain - the membrane proton channel. These two domains are linked by a central stalk rotating inside the F(1) region and a stationary peripheral stalk. During catalysis, ATP synthesis in the catalytic domain of F(1) is coupled via a rotary mechanism of the central stalk subunits to proton translocation. In vivo, can only synthesize ATP although its ATP hydrolase activity can be activated artificially in vitro. With the catalytic subunit beta (ATP5F1B), forms the catalytic core in the F(1) domain. Subunit alpha does not bear the catalytic high-affinity ATP-binding sites. The sequence is that of ATP synthase F(1) complex subunit alpha, mitochondrial from Rattus norvegicus (Rat).